Reading from the N-terminus, the 284-residue chain is Protein phosphatase 1 regulatory subunit 3B (284 aa).

Residues 61 to 64 (RVSF) carry the PP1-binding motif motif. A CBM21 domain is found at 124-232 (RNRLQTNHVC…SNKGKNYRIT (109 aa)). Serine 260 carries the phosphoserine modification.

In terms of assembly, interacts with glycogen, PPP1CC catalytic subunit of PP1 and PYGL. Associates with glycogen particles. Forms complexes with debranching enzyme, glycogen phosphorylase, glycogen synthase and phosphorylase kinase which is necessary for its regulation of PP1 activity. Highly expressed in liver (at protein level). Expressed predominantly in liver. Expressed moderately in heart. Expressed weakly in prostate, stomach, thyroid, lung, kidney, spleen and skeletal muscle.

Functionally, acts as a glycogen-targeting subunit for phosphatase PP1. Facilitates interaction of the PP1 with enzymes of the glycogen metabolism and regulates its activity. Suppresses the rate at which PP1 dephosphorylates (inactivates) glycogen phosphorylase and enhances the rate at which it activates glycogen synthase and therefore limits glycogen breakdown. Its activity is inhibited by PYGL, resulting in inhibition of the glycogen synthase and glycogen phosphorylase phosphatase activities of PP1. Dramatically increases basal and insulin-stimulated glycogen synthesis upon overexpression in hepatocytes. The polypeptide is Protein phosphatase 1 regulatory subunit 3B (Ppp1r3b) (Mus musculus (Mouse)).